Reading from the N-terminus, the 514-residue chain is Putative transposase y4uI (514 aa).

In terms of domain architecture, HTH IS408-type spans 11-93; it reads VREILKLRLD…PDWSAVAREL (83 aa). The region spanning 128-317 is the Integrase catalytic domain; it reads HGRLPLVMRQ…TRRALFDELD (190 aa).

Belongs to the transposase IS21/IS408/IS1162 family.

In Sinorhizobium fredii (strain NBRC 101917 / NGR234), this protein is Putative transposase y4uI.